The sequence spans 278 residues: Sulfide dehydrogenase subunit beta (278 aa).

A propeptide spanning residues 1–4 (MFKI) is cleaved from the precursor. Residues 1-95 (MFKILRKERL…LGPLGKPSHI (95 aa)) form the FAD-binding FR-type domain. [2Fe-2S] cluster contacts are provided by Cys222, Cys225, and Cys237.

Heterodimer of alpha and beta subunits. The cofactor is FAD. [2Fe-2S] cluster serves as cofactor.

The protein resides in the cytoplasm. It catalyses the reaction n sulfur + hydrogen sulfide + NADP(+) = (n+1) sulfur + NADPH. The catalysed reaction is 2 reduced [2Fe-2S]-[ferredoxin] + NADP(+) + H(+) = 2 oxidized [2Fe-2S]-[ferredoxin] + NADPH. Its function is as follows. A bifunctional enzyme that catalyzes the reduction of elemental sulfur or polysulfide to hydrogen sulfide with NADPH as electron donor. Also functions as a reduced ferredoxin:NADP oxidoreductase with a very high affinity for reduced ferredoxin. Exhibits a broad specificity for various physiological and non-physiological substrates with varied reduction potentials such as methyl viologen, benzyl viologen, FAD, FMN, methylene blue, 2,6-dichlorophenolindophenol (DCIP), cytochrome C and ferricyanide with highest preference for benzyl viologen. Does not reduce fumarate, succinate, nitrate, nitrite, sulfate, sulfite or protons. Does not possess any hydrogenase activity or NADPH-dependent glutamate synthase activity. This chain is Sulfide dehydrogenase subunit beta, found in Pyrococcus furiosus (strain ATCC 43587 / DSM 3638 / JCM 8422 / Vc1).